The sequence spans 360 residues: DNA replication and repair protein RecF (360 aa).

Residue 30–37 (GHNGSGKT) participates in ATP binding.

It belongs to the RecF family.

The protein localises to the cytoplasm. Its function is as follows. The RecF protein is involved in DNA metabolism; it is required for DNA replication and normal SOS inducibility. RecF binds preferentially to single-stranded, linear DNA. It also seems to bind ATP. In Shewanella denitrificans (strain OS217 / ATCC BAA-1090 / DSM 15013), this protein is DNA replication and repair protein RecF.